We begin with the raw amino-acid sequence, 279 residues long: Shikimate dehydrogenase (NADP(+)) (279 aa).

Residues 21 to 23 (SKS) and threonine 68 contribute to the shikimate site. Lysine 72 serves as the catalytic Proton acceptor. Residue glutamate 84 participates in NADP(+) binding. Positions 93 and 109 each coordinate shikimate. Residues 133–137 (GAGGA), 157–162 (NRTQAK), and methionine 220 contribute to the NADP(+) site. A shikimate-binding site is contributed by tyrosine 222. NADP(+) is bound at residue glycine 244.

Belongs to the shikimate dehydrogenase family. Homodimer.

It carries out the reaction shikimate + NADP(+) = 3-dehydroshikimate + NADPH + H(+). Its pathway is metabolic intermediate biosynthesis; chorismate biosynthesis; chorismate from D-erythrose 4-phosphate and phosphoenolpyruvate: step 4/7. In terms of biological role, involved in the biosynthesis of the chorismate, which leads to the biosynthesis of aromatic amino acids. Catalyzes the reversible NADPH linked reduction of 3-dehydroshikimate (DHSA) to yield shikimate (SA). The chain is Shikimate dehydrogenase (NADP(+)) from Shewanella halifaxensis (strain HAW-EB4).